We begin with the raw amino-acid sequence, 166 residues long: MTWTTPDLCDRFPEVAVAEPLFRHFGGRTTFSGPIATVRCVEDNSRIRELASTPGDGRVLVVDGQGSLRQALFGDQIGAQAVANGWAGVLIHGCVRDVEILAGLPLGVLALAACPRRTERRDLGDVDVPVNFAGVAFVPGHWLYADANGVVVAATPLSLEIAGVEH.

Substrate-binding positions include 74 to 77 (GDQI) and Arg96. Asp97 contacts a divalent metal cation.

Belongs to the class II aldolase/RraA-like family. As to quaternary structure, homotrimer. The cofactor is a divalent metal cation.

The catalysed reaction is 4-hydroxy-4-methyl-2-oxoglutarate = 2 pyruvate. It carries out the reaction oxaloacetate + H(+) = pyruvate + CO2. In terms of biological role, catalyzes the aldol cleavage of 4-hydroxy-4-methyl-2-oxoglutarate (HMG) into 2 molecules of pyruvate. Also contains a secondary oxaloacetate (OAA) decarboxylase activity due to the common pyruvate enolate transition state formed following C-C bond cleavage in the retro-aldol and decarboxylation reactions. The chain is Putative 4-hydroxy-4-methyl-2-oxoglutarate aldolase from Xanthomonas campestris pv. campestris (strain 8004).